The chain runs to 501 residues: Glucose-6-phosphate isomerase (501 aa).

Residues 78 to 101 form a disordered region; the sequence is GIANPTENRAAEHSAERGDGAPES. Over residues 86–97 the composition is skewed to basic and acidic residues; sequence RAAEHSAERGDG. Glu-333 (proton donor) is an active-site residue. Residues His-364 and Lys-474 contribute to the active site.

Belongs to the GPI family.

It is found in the cytoplasm. The enzyme catalyses alpha-D-glucose 6-phosphate = beta-D-fructose 6-phosphate. It participates in carbohydrate biosynthesis; gluconeogenesis. Its pathway is carbohydrate degradation; glycolysis; D-glyceraldehyde 3-phosphate and glycerone phosphate from D-glucose: step 2/4. Catalyzes the reversible isomerization of glucose-6-phosphate to fructose-6-phosphate. This is Glucose-6-phosphate isomerase from Sphingopyxis alaskensis (strain DSM 13593 / LMG 18877 / RB2256) (Sphingomonas alaskensis).